A 472-amino-acid polypeptide reads, in one-letter code: Citrate synthase, mitochondrial (472 aa).

Residues His-308, His-354, and Asp-409 contribute to the active site.

Belongs to the citrate synthase family. Homodimer.

Its subcellular location is the mitochondrion matrix. The catalysed reaction is oxaloacetate + acetyl-CoA + H2O = citrate + CoA + H(+). Its pathway is carbohydrate metabolism; tricarboxylic acid cycle; isocitrate from oxaloacetate: step 1/2. In Daucus carota (Wild carrot), this protein is Citrate synthase, mitochondrial (CS).